The sequence spans 256 residues: Phosphonates import ATP-binding protein PhnC (256 aa).

The 245-residue stretch at 7–251 (IEMKNVTKVY…VFDNIYNGGK (245 aa)) folds into the ABC transporter domain. Residue 40–47 (GLSGAGKS) coordinates ATP.

It belongs to the ABC transporter superfamily. Phosphonates importer (TC 3.A.1.9.1) family. In terms of assembly, the complex is composed of two ATP-binding proteins (PhnC), two transmembrane proteins (PhnE) and a solute-binding protein (PhnD).

Its subcellular location is the cell membrane. The catalysed reaction is phosphonate(out) + ATP + H2O = phosphonate(in) + ADP + phosphate + H(+). Its function is as follows. Part of the ABC transporter complex PhnCDE involved in phosphonates import. Responsible for energy coupling to the transport system. In Lactobacillus delbrueckii subsp. bulgaricus (strain ATCC 11842 / DSM 20081 / BCRC 10696 / JCM 1002 / NBRC 13953 / NCIMB 11778 / NCTC 12712 / WDCM 00102 / Lb 14), this protein is Phosphonates import ATP-binding protein PhnC.